The following is a 153-amino-acid chain: ORM1-like protein 2 (153 aa).

Topologically, residues 1 to 21 (MNVGVAHSEVNPNTRVMNSRG) are cytoplasmic. The next 2 membrane-spanning stretches (helical) occupy residues 22–42 (IWLAYIILVGLLHMVLLSIPF) and 43–63 (FSIPVVWTLTNVIHNLATYVF). Residues 64–105 (LHTVKGTPFETPDQGKARLLTHWEQMDYGLQFTSSRKFLSIS) are Cytoplasmic-facing. Residues 106-126 (PIVLYLLASFYTKYDAAHFLI) form a helical membrane-spanning segment. The Extracellular segment spans residues 127 to 153 (NTASLLSVLLPKLPQFHGVRVFGINKY).

The protein belongs to the ORM family. As to quaternary structure, ceramide-sensitive subunit of the serine palmitoyltransferase (SPT) complex, which is also composed of SPTLC1, SPTLC2/3 and SPTSSA/B. In terms of tissue distribution, widely expressed. Expressed in adult and fetal heart, brain, lung, liver, skeletal muscle and kidney. Expressed in adult pancreas and placenta and in fetal spleen abd thymus.

It localises to the endoplasmic reticulum membrane. Functionally, plays an essential role in the homeostatic regulation of sphingolipid de novo biosynthesis by modulating the activity of the serine palmitoyltransferase (SPT) in response to ceramide levels. When complexed to SPT, the binding of ceramides to its N-terminus stabilizes a conformation that block SPT substrate entry, hence preventing SPT catalytic activity. Through this mechanism, maintains ceramide levels at sufficient concentrations for the production of complex sphingolipids, but which prevents the accumulation of ceramides to levels that trigger apoptosis. The chain is ORM1-like protein 2 (ORMDL2) from Homo sapiens (Human).